The primary structure comprises 244 residues: Leucyl/phenylalanyl-tRNA--protein transferase (244 aa).

Belongs to the L/F-transferase family.

Its subcellular location is the cytoplasm. The enzyme catalyses N-terminal L-lysyl-[protein] + L-leucyl-tRNA(Leu) = N-terminal L-leucyl-L-lysyl-[protein] + tRNA(Leu) + H(+). It carries out the reaction N-terminal L-arginyl-[protein] + L-leucyl-tRNA(Leu) = N-terminal L-leucyl-L-arginyl-[protein] + tRNA(Leu) + H(+). It catalyses the reaction L-phenylalanyl-tRNA(Phe) + an N-terminal L-alpha-aminoacyl-[protein] = an N-terminal L-phenylalanyl-L-alpha-aminoacyl-[protein] + tRNA(Phe). Functions in the N-end rule pathway of protein degradation where it conjugates Leu, Phe and, less efficiently, Met from aminoacyl-tRNAs to the N-termini of proteins containing an N-terminal arginine or lysine. This Janthinobacterium sp. (strain Marseille) (Minibacterium massiliensis) protein is Leucyl/phenylalanyl-tRNA--protein transferase.